Consider the following 524-residue polypeptide: Bifunctional purine biosynthesis protein PurH (524 aa).

The MGS-like domain maps to 1–145; sequence MIKQALLSVS…KNHRDVTVIV (145 aa).

It belongs to the PurH family.

The enzyme catalyses (6R)-10-formyltetrahydrofolate + 5-amino-1-(5-phospho-beta-D-ribosyl)imidazole-4-carboxamide = 5-formamido-1-(5-phospho-D-ribosyl)imidazole-4-carboxamide + (6S)-5,6,7,8-tetrahydrofolate. It catalyses the reaction IMP + H2O = 5-formamido-1-(5-phospho-D-ribosyl)imidazole-4-carboxamide. It participates in purine metabolism; IMP biosynthesis via de novo pathway; 5-formamido-1-(5-phospho-D-ribosyl)imidazole-4-carboxamide from 5-amino-1-(5-phospho-D-ribosyl)imidazole-4-carboxamide (10-formyl THF route): step 1/1. The protein operates within purine metabolism; IMP biosynthesis via de novo pathway; IMP from 5-formamido-1-(5-phospho-D-ribosyl)imidazole-4-carboxamide: step 1/1. This is Bifunctional purine biosynthesis protein PurH from Cupriavidus necator (strain ATCC 17699 / DSM 428 / KCTC 22496 / NCIMB 10442 / H16 / Stanier 337) (Ralstonia eutropha).